We begin with the raw amino-acid sequence, 163 residues long: HTH-type transcriptional regulator IscR (163 aa).

Residues 2–131 enclose the HTH rrf2-type domain; sequence RLTSKGRYAV…NNITLGELVN (130 aa). The segment at residues 28 to 51 is a DNA-binding region (H-T-H motif); that stretch reads LADISERQGISLSYLEQLFSRLRK. [2Fe-2S] cluster contacts are provided by Cys-92, Cys-98, and Cys-104.

The cofactor is [2Fe-2S] cluster.

Functionally, regulates the transcription of several operons and genes involved in the biogenesis of Fe-S clusters and Fe-S-containing proteins. This Klebsiella pneumoniae subsp. pneumoniae (strain ATCC 700721 / MGH 78578) protein is HTH-type transcriptional regulator IscR.